The chain runs to 541 residues: Membrane protein insertase YidC (541 aa).

The helical transmembrane segment at 7–27 threads the bilayer; that stretch reads ILLLALALVSFLLFQQWQVET. A compositionally biased stretch (polar residues) spans 34–55; sequence TVSTVQQTHKNGDVPTSSTANS. The tract at residues 34–59 is disordered; sequence TVSTVQQTHKNGDVPTSSTANSDAPV. Transmembrane regions (helical) follow at residues 343–363, 418–438, 456–476, and 495–515; these read SFIQ…TFIV, LGGC…YWAL, LSAQ…MFLI, and FIPV…VLYW.

The protein belongs to the OXA1/ALB3/YidC family. Type 1 subfamily. As to quaternary structure, interacts with the Sec translocase complex via SecD. Specifically interacts with transmembrane segments of nascent integral membrane proteins during membrane integration.

Its subcellular location is the cell inner membrane. Required for the insertion and/or proper folding and/or complex formation of integral membrane proteins into the membrane. Involved in integration of membrane proteins that insert both dependently and independently of the Sec translocase complex, as well as at least some lipoproteins. Aids folding of multispanning membrane proteins. This chain is Membrane protein insertase YidC, found in Aliivibrio salmonicida (strain LFI1238) (Vibrio salmonicida (strain LFI1238)).